The primary structure comprises 599 residues: Prostaglandin G/H synthase 1 (599 aa).

A signal peptide spans 1-23; the sequence is MSRSLLLWFLLFLLLLPPLPVLL. Positions 31–69 constitute an EGF-like domain; sequence PVNPCCYYPCQHQGICVRFGLDRYQCDCTRTGYSGPNCT. 4 disulfides stabilise this stretch: Cys35-Cys46, Cys36-Cys158, Cys40-Cys56, and Cys58-Cys68. Residues Asn67, Asn103, and Asn143 are each glycosylated (N-linked (GlcNAc...) asparagine). The active-site Proton acceptor is His206. Tyr384 functions as the For cyclooxygenase activity in the catalytic mechanism. Position 387 (His387) interacts with heme b. Cys568 and Cys574 are oxidised to a cystine.

The protein belongs to the prostaglandin G/H synthase family. Homodimer. Requires heme b as cofactor.

The protein resides in the microsome membrane. Its subcellular location is the endoplasmic reticulum membrane. It carries out the reaction (5Z,8Z,11Z,14Z)-eicosatetraenoate + AH2 + 2 O2 = prostaglandin H2 + A + H2O. The enzyme catalyses (5Z,8Z,11Z,14Z)-eicosatetraenoate + 2 O2 = prostaglandin G2. The catalysed reaction is prostaglandin G2 + AH2 = prostaglandin H2 + A + H2O. It catalyses the reaction (9Z,12Z)-octadecadienoate + AH2 + O2 = (9R)-hydroxy-(10E,12Z)-octadecadienoate + A + H2O. It carries out the reaction (9Z,12Z)-octadecadienoate + AH2 + O2 = (9S)-hydroxy-(10E,12Z)-octadecadienoate + A + H2O. The enzyme catalyses (9Z,12Z)-octadecadienoate + AH2 + O2 = (13S)-hydroxy-(9Z,11E)-octadecadienoate + A + H2O. The catalysed reaction is (9Z,12Z)-octadecadienoate + AH2 + O2 = (13R)-hydroxy-(9Z,11E)-octadecadienoate + A + H2O. The protein operates within lipid metabolism; prostaglandin biosynthesis. With respect to regulation, the cyclooxygenase activity is inhibited by nonsteroidal anti-inflammatory drugs (NSAIDs) including ibuprofen, flurbiprofen, ketoprofen, naproxen, flurbiprofen, anirolac, fenclofenac and diclofenac. Dual cyclooxygenase and peroxidase that plays an important role in the biosynthesis pathway of prostanoids, a class of C20 oxylipins mainly derived from arachidonate ((5Z,8Z,11Z,14Z)-eicosatetraenoate, AA, C20:4(n-6)), with a particular role in the inflammatory response. The cyclooxygenase activity oxygenates AA to the hydroperoxy endoperoxide prostaglandin G2 (PGG2), and the peroxidase activity reduces PGG2 to the hydroxy endoperoxide prostaglandin H2 (PGH2), the precursor of all 2-series prostaglandins and thromboxanes. This complex transformation is initiated by abstraction of hydrogen at carbon 13 (with S-stereochemistry), followed by insertion of molecular O2 to form the endoperoxide bridge between carbon 9 and 11 that defines prostaglandins. The insertion of a second molecule of O2 (bis-oxygenase activity) yields a hydroperoxy group in PGG2 that is then reduced to PGH2 by two electrons. Involved in the constitutive production of prostanoids in particular in the stomach and platelets. In gastric epithelial cells, it is a key step in the generation of prostaglandins, such as prostaglandin E2 (PGE2), which plays an important role in cytoprotection. In platelets, it is involved in the generation of thromboxane A2 (TXA2), which promotes platelet activation and aggregation, vasoconstriction and proliferation of vascular smooth muscle cells. Can also use linoleate (LA, (9Z,12Z)-octadecadienoate, C18:2(n-6)) as substrate and produce hydroxyoctadecadienoates (HODEs) in a regio- and stereospecific manner, being (9R)-HODE ((9R)-hydroxy-(10E,12Z)-octadecadienoate) and (13S)-HODE ((13S)-hydroxy-(9Z,11E)-octadecadienoate) its major products. The protein is Prostaglandin G/H synthase 1 of Homo sapiens (Human).